Reading from the N-terminus, the 498-residue chain is MNLNRQYVNRFIDDAIQYGDYEREDNYYLQNLILEITKAESIDETKNNNGLVNPTSNEIAQFWIQQMLNNGLLEDVVYQKEIVETKLLDLITPKPSTINREFWKRYESHPEKATGYFYQICKRNHYVKEDAIAKNIHYYTETEYGDLEITINLSKPEKDAKEIAKAREAKQSSYPANALCMENEGFVGSVTQAARRNHRIVRLNLNHQPWGFQFSPYAYFPEHSIVLSEAHEPMKIEKQTFSNLLQFVQKFPHYFAGSNADLPIVGGSILSHNHYQTGRHTFPMDHAPEMKQFKMEQFPDVQAAILKWPMSVIRLKGEDLDEMTEAADHIFETWKSYTDEKLDIRAYSQDGTRHHTVTPIARFNQTTSEYELDLVLRDNQTSTQYPDGIFHPHNDVHHIKKENIGLIEVMGTAILPGRLKKELLEVERYVLGDINAEPGSHKKWADKMKEKYNFNNENAKNIIHQEVGRIFKRVLEDSGVFKQSTEGQKGFEKFIQTL.

The protein belongs to the galactose-1-phosphate uridylyltransferase type 2 family.

It is found in the cytoplasm. The catalysed reaction is alpha-D-galactose 1-phosphate + UDP-alpha-D-glucose = alpha-D-glucose 1-phosphate + UDP-alpha-D-galactose. It functions in the pathway carbohydrate metabolism; galactose metabolism. This Staphylococcus carnosus (strain TM300) protein is Galactose-1-phosphate uridylyltransferase.